The following is a 551-amino-acid chain: MFS efflux transporter aclA (551 aa).

8 consecutive transmembrane segments (helical) span residues 26–46 (WAVF…ITAI), 64–84 (VWIA…IGQI), 93–113 (PMII…GATS), 125–145 (GLGA…LVPL), 154–174 (IALS…GALV), 181–201 (WVFY…VLCL), 220–240 (WVGN…LVIG), and 251–271 (VLVP…FEAS). An N-linked (GlcNAc...) asparagine glycan is attached at Asn-286. Helical transmembrane passes span 294-314 (VLAF…TLFF), 327-347 (VDVI…GAIM), 356-376 (LHWA…TWDA), 385-405 (ILQC…LPAI), 420-440 (AYAF…AVVF), and 492-512 (LRTV…LVVV).

The protein belongs to the major facilitator superfamily.

It is found in the membrane. Its function is as follows. MFS efflux transporter; part of the gene cluster that mediates the biosynthesis of aspirochlorine (or antibiotic A30641), an unusual halogenated spiro compound with distinctive antifungal properties due to selective inhibition of protein biosynthesis, and which is also active against bacteria, viruses, and murine tumor cells. The polypeptide is MFS efflux transporter aclA (Aspergillus oryzae (strain ATCC 42149 / RIB 40) (Yellow koji mold)).